The chain runs to 215 residues: Thiamine-phosphate synthase (215 aa).

4-amino-2-methyl-5-(diphosphooxymethyl)pyrimidine is bound by residues 43–47 (QFRDK) and Asn-78. Positions 79 and 98 each coordinate Mg(2+). Ser-117 is a binding site for 4-amino-2-methyl-5-(diphosphooxymethyl)pyrimidine. 2-[(2R,5Z)-2-carboxy-4-methylthiazol-5(2H)-ylidene]ethyl phosphate is bound at residue 143–145 (TNS). Lys-146 contributes to the 4-amino-2-methyl-5-(diphosphooxymethyl)pyrimidine binding site. 2-[(2R,5Z)-2-carboxy-4-methylthiazol-5(2H)-ylidene]ethyl phosphate contacts are provided by residues Gly-174 and 194–195 (IS).

This sequence belongs to the thiamine-phosphate synthase family. Mg(2+) serves as cofactor.

It carries out the reaction 2-[(2R,5Z)-2-carboxy-4-methylthiazol-5(2H)-ylidene]ethyl phosphate + 4-amino-2-methyl-5-(diphosphooxymethyl)pyrimidine + 2 H(+) = thiamine phosphate + CO2 + diphosphate. The enzyme catalyses 2-(2-carboxy-4-methylthiazol-5-yl)ethyl phosphate + 4-amino-2-methyl-5-(diphosphooxymethyl)pyrimidine + 2 H(+) = thiamine phosphate + CO2 + diphosphate. It catalyses the reaction 4-methyl-5-(2-phosphooxyethyl)-thiazole + 4-amino-2-methyl-5-(diphosphooxymethyl)pyrimidine + H(+) = thiamine phosphate + diphosphate. Its pathway is cofactor biosynthesis; thiamine diphosphate biosynthesis; thiamine phosphate from 4-amino-2-methyl-5-diphosphomethylpyrimidine and 4-methyl-5-(2-phosphoethyl)-thiazole: step 1/1. Functionally, condenses 4-methyl-5-(beta-hydroxyethyl)thiazole monophosphate (THZ-P) and 2-methyl-4-amino-5-hydroxymethyl pyrimidine pyrophosphate (HMP-PP) to form thiamine monophosphate (TMP). In Lactococcus lactis subsp. lactis (strain IL1403) (Streptococcus lactis), this protein is Thiamine-phosphate synthase.